The sequence spans 577 residues: Cytidine monophosphate-N-acetylneuraminic acid hydroxylase (577 aa).

Positions 1–4 (MMDR) are excised as a propeptide. The region spanning 14–112 (LSPAEVANLK…IEMDENNGLS (99 aa)) is the Rieske domain. Positions 54, 56, 75, and 78 each coordinate [2Fe-2S] cluster.

This sequence belongs to the CMP-Neu5Ac hydroxylase family. Requires [2Fe-2S] cluster as cofactor. As to expression, expressed in all tissues tested, except in brain.

Its subcellular location is the cytoplasm. It localises to the endoplasmic reticulum. The catalysed reaction is CMP-N-acetyl-beta-neuraminate + 2 Fe(II)-[cytochrome b5] + O2 + 2 H(+) = CMP-N-glycoloyl-beta-neuraminate + 2 Fe(III)-[cytochrome b5] + H2O. Its pathway is amino-sugar metabolism; N-acetylneuraminate metabolism. In terms of biological role, sialic acids are components of carbohydrate chains of glycoconjugates and are involved in cell-cell recognition and cell-pathogen interactions. Catalyzes the conversion of CMP-N-acetylneuraminic acid (CMP-Neu5Ac) into its hydroxylated derivative CMP-N-glycolylneuraminic acid (CMP-Neu5Gc), a sialic acid abundantly expressed at the surface of many cells. The protein is Cytidine monophosphate-N-acetylneuraminic acid hydroxylase (Cmah) of Mus musculus (Mouse).